We begin with the raw amino-acid sequence, 174 residues long: F-box protein At1g70360 (174 aa).

Residues 136–174 enclose the F-box domain; that stretch reads PPCFISLPRELKHKILESLPGVDIGTLACVSSELRDMAS.

This chain is F-box protein At1g70360, found in Arabidopsis thaliana (Mouse-ear cress).